The following is a 614-amino-acid chain: UvrABC system protein C (614 aa).

In terms of domain architecture, GIY-YIG spans 26 to 104 (NLPGVYKMLG…IKEYRPPYNV (79 aa)). The UVR domain occupies 215–250 (SDIHSALIEKMEASAEELDFEKAVFYRDQLSMLREV).

It belongs to the UvrC family. As to quaternary structure, interacts with UvrB in an incision complex.

Its subcellular location is the cytoplasm. In terms of biological role, the UvrABC repair system catalyzes the recognition and processing of DNA lesions. UvrC both incises the 5' and 3' sides of the lesion. The N-terminal half is responsible for the 3' incision and the C-terminal half is responsible for the 5' incision. The protein is UvrABC system protein C of Psychrobacter arcticus (strain DSM 17307 / VKM B-2377 / 273-4).